The following is a 140-amino-acid chain: Large ribosomal subunit protein uL11 (140 aa).

It belongs to the universal ribosomal protein uL11 family. Part of the ribosomal stalk of the 50S ribosomal subunit. Interacts with L10 and the large rRNA to form the base of the stalk. L10 forms an elongated spine to which L12 dimers bind in a sequential fashion forming a multimeric L10(L12)X complex. Post-translationally, one or more lysine residues are methylated.

In terms of biological role, forms part of the ribosomal stalk which helps the ribosome interact with GTP-bound translation factors. This is Large ribosomal subunit protein uL11 from Halothermothrix orenii (strain H 168 / OCM 544 / DSM 9562).